The primary structure comprises 356 residues: Protein SEC13 homolog (356 aa).

WD repeat units lie at residues 11–50 (EHEDMVHHAALDFYGLLLATCSSDGSVRIFHSRKNNKALA), 54–95 (GHQG…DWTK), 101–142 (NHDS…GVWD), 149–205 (AHTI…WVEE), 210–253 (AHSD…SEWT), and 259–298 (TFDDAVWSISWSTTGNILAVTGGDNNVTLWKENTEGQWIR). Residues 307–356 (IQSKQPSHLPHSHSQQQQALQQHQQQAPSHPGPSSDSEHSSNLSNSQLSN) are disordered. Residues 308-356 (QSKQPSHLPHSHSQQQQALQQHQQQAPSHPGPSSDSEHSSNLSNSQLSN) are compositionally biased toward low complexity.

It belongs to the WD repeat SEC13 family. In terms of assembly, probable component of the nuclear pore complex (NPC). Component of the GATOR complex consisting of mio, Nup44A/Seh1, Im11, Nplr3, Nplr2, Wdr24, Wdr59 and Sec13. Within the GATOR complex, probable component of the GATOR2 subcomplex which is likely composed of mio, Nup44A/Seh1, Wdr24, Wdr59 and Sec13. Interacts with msk. Interacts (preferentially when phosphorylated) with Mad. The GATOR2 complex associates with unmet in the absence of S-adenosyl-L-methionine; the mio-Wdr24-Nup44A subcomplex is essential and sufficient for this interaction while Wdr59 and Sec13 are dispensable. This association acts as a nutrient sensor to inhibit mTORC1 signaling in the absence of methionine. As to expression, salivary glands.

Its subcellular location is the nucleus envelope. It localises to the nucleus. The protein resides in the nucleoplasm. The protein localises to the cytoplasm. It is found in the cytoskeleton. Its subcellular location is the microtubule organizing center. It localises to the centrosome. The protein resides in the nuclear pore complex. The protein localises to the cytoplasmic vesicle. It is found in the COPII-coated vesicle membrane. Its subcellular location is the endoplasmic reticulum membrane. It localises to the lysosome membrane. In terms of biological role, functions as a component of the nuclear pore complex (NPC) and the COPII coat. At the endoplasmic reticulum, SEC13 is involved in the biogenesis of COPII-coated vesicles. Recruited to transcriptionally active chromatin at the time of transcription initiation by RNA polymerase II. Required for proper expression of ecdysone-responsive genes such as Eip74EF and Eip75B during larval development. Required for reactivation of transcription after heat shock. Required for nuclear import of phosphorylated Mad via importin msk. Has no role in classical nuclear localization signal (cNLS)-dependent nuclear import via importin-beta. Functionally, a component of the GATOR subcomplex GATOR2 which functions as an activator of the amino acid-sensing branch of the mTORC1 signaling pathway. The two GATOR subcomplexes, GATOR1 and GATOR2, regulate the mTORC1 pathway in order to mediate metabolic homeostasis, female gametogenesis and the response to amino acid limitation and complete starvation. GATOR2 activates the mTORC1 signaling pathway through the inhibition of the GATOR1 subcomplex, controlling the switch to cell proliferation and growth under nutrient replete conditions and during female oocyte development. This Drosophila melanogaster (Fruit fly) protein is Protein SEC13 homolog.